Here is a 381-residue protein sequence, read N- to C-terminus: Probable G-protein coupled receptor 34 (381 aa).

At 1–61 the chain is on the extracellular side; the sequence is MRSHTITMTT…LLSTVLTTSY (61 aa). Asparagine 28, asparagine 36, and asparagine 42 each carry an N-linked (GlcNAc...) asparagine glycan. The helical transmembrane segment at 62 to 82 threads the bilayer; sequence SVIFIVGLVGNIIALYVFLGI. The Cytoplasmic segment spans residues 83–88; the sequence is HRKRNS. Residues 89–109 traverse the membrane as a helical segment; that stretch reads IQIYLLNVAIADLLLIFCLPF. Over 110–128 the chain is Extracellular; the sequence is RIMYHINQNKWTLGVILCK. Cysteine 127 and cysteine 204 form a disulfide bridge. The helical transmembrane segment at 129–149 threads the bilayer; it reads VVGTLFYMNMYISIILLGFIS. Residues 150-171 are Cytoplasmic-facing; the sequence is LDRYIKINRSIQQRKAITTKQS. Residues 172–192 traverse the membrane as a helical segment; it reads IYVCCIVWMLALGGFLTMIIL. The Extracellular segment spans residues 193–216; it reads TLKKGGHNSTMCFHYRDKHNAKGE. A glycan (N-linked (GlcNAc...) asparagine) is linked at asparagine 200. Residues 217–237 form a helical membrane-spanning segment; that stretch reads AIFNFILVVMFWLIFLLIILS. The Cytoplasmic portion of the chain corresponds to 238–269; the sequence is YIKIGKNLLRISKRRSKFPNSGKYATTARNSF. Residues 270–290 form a helical membrane-spanning segment; the sequence is IVLIIFTICFVPYHAFRFIYI. Residues 291–310 lie on the Extracellular side of the membrane; the sequence is SSQLNVSSCYWKEIVHKTNE. A glycan (N-linked (GlcNAc...) asparagine) is linked at asparagine 295. Residues 311-331 form a helical membrane-spanning segment; it reads IMLVLSSFNSCLDPVMYFLMS. Residues 332 to 381 are Cytoplasmic-facing; that stretch reads SNIRKIMCQLLFRRFQGEPSRSESTSEFKPGYSLHDTSVAVKIQSSSKST.

This sequence belongs to the G-protein coupled receptor 1 family.

It is found in the cell membrane. Its function is as follows. G-protein-coupled receptor of lysophosphatidylserine (LysoPS) that plays different roles in immune response. Acts a damage-sensing receptor that triggers tissue repair upon recognition of dying neutrophils. Mechanistically, apoptotic neutrophils release lysophosphatydilserine that are recognized by type 3 innate lymphoid cells (ILC3s) via GPR34, which activates downstream PI3K-AKT and RAS-ERK signaling pathways leading to STAT3 activation and IL-22 production. Plays an important role in microglial function, controlling morphology and phagocytosis. The protein is Probable G-protein coupled receptor 34 (GPR34) of Gorilla gorilla gorilla (Western lowland gorilla).